We begin with the raw amino-acid sequence, 91 residues long: Small ribosomal subunit protein uS15 (91 aa).

It belongs to the universal ribosomal protein uS15 family. Part of the 30S ribosomal subunit. Forms a bridge to the 50S subunit in the 70S ribosome, contacting the 23S rRNA.

Functionally, one of the primary rRNA binding proteins, it binds directly to 16S rRNA where it helps nucleate assembly of the platform of the 30S subunit by binding and bridging several RNA helices of the 16S rRNA. In terms of biological role, forms an intersubunit bridge (bridge B4) with the 23S rRNA of the 50S subunit in the ribosome. The polypeptide is Small ribosomal subunit protein uS15 (Sulfurimonas denitrificans (strain ATCC 33889 / DSM 1251) (Thiomicrospira denitrificans (strain ATCC 33889 / DSM 1251))).